A 31-amino-acid polypeptide reads, in one-letter code: Malate dehydrogenase, mitochondrial (31 aa).

Residues 9–19 (GIGQPLSLLMK) and 20–31 (DDLFNINAGIVK) contribute to the NAD(+) site.

It belongs to the LDH/MDH superfamily. MDH type 1 family. As to quaternary structure, homodimer.

It is found in the mitochondrion matrix. It carries out the reaction (S)-malate + NAD(+) = oxaloacetate + NADH + H(+). The sequence is that of Malate dehydrogenase, mitochondrial from Imperata cylindrica (Cogon grass).